We begin with the raw amino-acid sequence, 385 residues long: Protein pelota homolog (385 aa).

Belongs to the eukaryotic release factor 1 family. Pelota subfamily. Component of the Pelota-HBS1L complex, also named Dom34-Hbs1 complex, composed of PELO and HBS1L. A divalent metal cation is required as a cofactor.

The protein resides in the cytoplasm. Functionally, component of the Pelota-HBS1L complex, a complex that recognizes stalled ribosomes and triggers the No-Go Decay (NGD) pathway. In the Pelota-HBS1L complex, PELO recognizes ribosomes stalled at the 3' end of an mRNA and engages stalled ribosomes by destabilizing mRNA in the mRNA channel. Following mRNA extraction from stalled ribosomes by the SKI complex, the Pelota-HBS1L complex promotes recruitment of ABCE1, which drives the disassembly of stalled ribosomes, followed by degradation of damaged mRNAs as part of the NGD pathway. The polypeptide is Protein pelota homolog (pelo) (Danio rerio (Zebrafish)).